Consider the following 499-residue polypeptide: 6-hydroxynicotinate reductase (499 aa).

2 consecutive 4Fe-4S ferredoxin-type domains span residues 1–29 (MFKIDEEKCKKCRMCVKECPVHAVYYEKK) and 31–61 (KGAIVEITEKCVECGICKRVCKFGAIENDAP). The [4Fe-4S] cluster site is built by C9, C12, C15, C19, C41, C44, C47, and C51.

As to quaternary structure, homotetramer. Requires an oxidized flavin as cofactor. It depends on [2Fe-2S] cluster as a cofactor. The cofactor is [4Fe-4S] cluster.

The enzyme catalyses 1,4,5,6-tetrahydro-6-oxonicotinate + oxidized 2[4Fe-4S]-[ferredoxin] = 6-hydroxynicotinate + reduced 2[4Fe-4S]-[ferredoxin] + 2 H(+). It participates in cofactor degradation; nicotinate degradation; propanoate and pyruvate from 6-hydroxynicotinate: step 1/8. In terms of biological role, catalyzes the reversible reduction of 6-hydroxynicotinate to 6-oxo-1,4,5,6-tetrahydronicotinate. The polypeptide is 6-hydroxynicotinate reductase (Eubacterium barkeri (Clostridium barkeri)).